Here is a 198-residue protein sequence, read N- to C-terminus: Mitrocomin (198 aa).

A propeptide spanning residues 1–8 (MSMGSRYA) is cleaved from the precursor. 3 EF-hand domains span residues 19–54 (KWIARHKHMFNFLDINSNGQINLNEMVHKASNIICK), 118–147 (DALFDIIDKDRNGSVSLDEWIQYTHCAGIQ), and 148–183 (QSRGQCEATFAHCDLDGDGKLDVDEMTRQHLGFWYS). Ca(2+)-binding residues include D32, N34, N36, Q38, E43, D125, D127, N129, S131, E136, D161, D163, D165, K167, and E172.

It belongs to the aequorin family.

In terms of biological role, ca(2+)-dependent bioluminescence photoprotein. Displays an emission peak at 470 nm (blue light). Trace amounts of calcium ion trigger the intramolecular oxidation of the chromophore, coelenterazine into coelenteramide and CO(2) with the concomitant emission of light. This chain is Mitrocomin (MI17), found in Mitrocoma cellularia (Cross jellyfish).